The primary structure comprises 495 residues: DNA double-strand break repair helicase HerA (495 aa).

ATP-binding positions include R141, G150–N155, and K458–I459.

It belongs to the HerA family. As to quaternary structure, forms a hexamer or a heptamer. Interacts with Mre11.

The enzyme catalyses Couples ATP hydrolysis with the unwinding of duplex DNA at the replication fork by translocating in the 5'-3' direction. This creates two antiparallel DNA single strands (ssDNA). The leading ssDNA polymer is the template for DNA polymerase III holoenzyme which synthesizes a continuous strand.. It catalyses the reaction ATP + H2O = ADP + phosphate + H(+). The catalysed reaction is Couples ATP hydrolysis with the unwinding of duplex DNA by translocating in the 3'-5' direction.. Its activity is regulated as follows. ATPase activity is slightly stimulated by either circular single- or double-stranded (ds)DNA with a weak preference for dsDNA. Helicase activity is stimulated by Mre11. Involved in DNA double-strand break (DSB) repair. Probably acts with NurA to stimulate resection of the 5' strand and produce the long 3' single-strand that is required for RadA loading. Has DNA-dependent ATPase activity and bidirectional DNA helicase activity. Loads on either a 3' or a 5' DNA tail for subsequent DNA unwinding. Can also unwind blunt-ended dsDNA, Holliday junction and splayed-arm DNA. The chain is DNA double-strand break repair helicase HerA from Sulfurisphaera tokodaii (strain DSM 16993 / JCM 10545 / NBRC 100140 / 7) (Sulfolobus tokodaii).